Reading from the N-terminus, the 827-residue chain is Zinc finger protein 438 (827 aa).

Disordered stretches follow at residues 1 to 31 (MQNSLSVPPRDEGESNIPSGTIQSRKGLQNK), 117 to 173 (LKLP…LYKP), and 193 to 232 (ALTNGSDHGDLRPPVTNTHGSLNPPATPASPTPEEPAKQD). Composition is skewed to polar residues over residues 16 to 31 (NIPSGTIQSRKGLQNK) and 150 to 159 (PAQTQMCPQM). Over residues 217–226 (PATPASPTPE) the composition is skewed to pro residues. 3 consecutive C2H2-type zinc fingers follow at residues 506–528 (HRCHVCNHHFQFKQHLQDHMNTH), 534–556 (YSCRICRKSYVRPGSLSTHMKLH), and 566–589 (MCCEFCAKVFGHIRVYFGHLKEVH). Residues 682 to 723 (FPGSKGTQEELVQHASHDWKRHPERGKPEKVHSSSEESHACP) form a disordered region. Basic and acidic residues-rich tracts occupy residues 688–699 (TQEELVQHASHD) and 706–721 (RGKPEKVHSSSEESHA). The C2H2-type 4 zinc-finger motif lies at 775–798 (FNCLLCAEMLGQKEDLLHHWKHQH).

The protein resides in the nucleus. Its function is as follows. Acts as a transcriptional repressor. The chain is Zinc finger protein 438 (ZNF438) from Pongo abelii (Sumatran orangutan).